The chain runs to 404 residues: Serine/threonine transporter SstT (404 aa).

Helical transmembrane passes span Ile10 to Ala30, Ala53 to Gly73, Ile81 to Tyr101, Ala140 to Leu160, Ala177 to Val197, Leu215 to Val235, Ile287 to Leu307, and Ile329 to Ile349.

This sequence belongs to the dicarboxylate/amino acid:cation symporter (DAACS) (TC 2.A.23) family.

The protein localises to the cell inner membrane. It catalyses the reaction L-serine(in) + Na(+)(in) = L-serine(out) + Na(+)(out). The enzyme catalyses L-threonine(in) + Na(+)(in) = L-threonine(out) + Na(+)(out). In terms of biological role, involved in the import of serine and threonine into the cell, with the concomitant import of sodium (symport system). The protein is Serine/threonine transporter SstT of Glaesserella parasuis serovar 5 (strain SH0165) (Haemophilus parasuis).